Consider the following 394-residue polypeptide: uncharacterized protein (394 aa).

Transmembrane regions (helical) follow at residues 13–35, 50–72, 79–97, 107–129, 136–158, 168–190, 218–240, 250–272, 277–299, 309–331, 344–366, and 371–393; these read AIIG…VPVL, VGVA…GWLS, LIIN…IAWS, GRGL…ELVL, IMGL…SPII, FLIN…PASL, INLS…PVEL, VPEI…CICF, VLYS…GIFL, ILGL…ALVN, AIYS…ILFS, and FEVL…LYLI.

The protein belongs to the major facilitator superfamily.

The protein resides in the cell membrane. This is an uncharacterized protein from Buchnera aphidicola subsp. Baizongia pistaciae (strain Bp).